A 344-amino-acid chain; its full sequence is Heat-inducible transcription repressor HrcA (344 aa).

Belongs to the HrcA family.

In terms of biological role, negative regulator of class I heat shock genes (grpE-dnaK-dnaJ and groELS operons). Prevents heat-shock induction of these operons. The chain is Heat-inducible transcription repressor HrcA from Streptococcus equi subsp. zooepidemicus (strain H70).